A 350-amino-acid polypeptide reads, in one-letter code: Spermidine/putrescine import ATP-binding protein PotA (350 aa).

Residues 6–236 form the ABC transporter domain; sequence LELRNISKQY…PENLWTAQFI (231 aa). 38–45 serves as a coordination point for ATP; the sequence is GPSGCGKT.

The protein belongs to the ABC transporter superfamily. Spermidine/putrescine importer (TC 3.A.1.11.1) family. In terms of assembly, the complex is composed of two ATP-binding proteins (PotA), two transmembrane proteins (PotB and PotC) and a solute-binding protein (PotD).

It localises to the cell membrane. The enzyme catalyses ATP + H2O + polyamine-[polyamine-binding protein]Side 1 = ADP + phosphate + polyamineSide 2 + [polyamine-binding protein]Side 1.. Functionally, part of the ABC transporter complex PotABCD involved in spermidine/putrescine import. Responsible for energy coupling to the transport system. The sequence is that of Spermidine/putrescine import ATP-binding protein PotA from Spiroplasma citri.